Reading from the N-terminus, the 147-residue chain is UPF0735 ACT domain-containing protein ABC1543 (147 aa).

In terms of domain architecture, ACT spans 70-145; that stretch reads TFSINLADRS…SVERVELVGS (76 aa).

It belongs to the UPF0735 family.

The sequence is that of UPF0735 ACT domain-containing protein ABC1543 from Shouchella clausii (strain KSM-K16) (Alkalihalobacillus clausii).